We begin with the raw amino-acid sequence, 142 residues long: Small ribosomal subunit protein uS9 (142 aa).

This sequence belongs to the universal ribosomal protein uS9 family.

Its subcellular location is the cytoplasm. The polypeptide is Small ribosomal subunit protein uS9 (RPS16) (Syntrichia ruralis (Great hairy screw-moss)).